Consider the following 616-residue polypeptide: Chaperone protein HscA (616 aa).

The protein belongs to the heat shock protein 70 family.

Chaperone involved in the maturation of iron-sulfur cluster-containing proteins. Has a low intrinsic ATPase activity which is markedly stimulated by HscB. Involved in the maturation of IscU. This is Chaperone protein HscA from Salmonella enteritidis PT4 (strain P125109).